The chain runs to 394 residues: Elongation factor Tu 2 (394 aa).

A tr-type G domain is found at 10–204 (KPHVNVGTIG…FLDSYIPEPE (195 aa)). Positions 19–26 (GHVDHGKT) are G1. A GTP-binding site is contributed by 19 to 26 (GHVDHGKT). Position 26 (Thr26) interacts with Mg(2+). The tract at residues 60 to 64 (GITIN) is G2. The interval 81 to 84 (DCPG) is G3. GTP-binding positions include 81–85 (DCPGH) and 136–139 (NKCD). The interval 136-139 (NKCD) is G4. A G5 region spans residues 174-176 (SAL).

The protein belongs to the TRAFAC class translation factor GTPase superfamily. Classic translation factor GTPase family. EF-Tu/EF-1A subfamily. Monomer.

The protein resides in the cytoplasm. The catalysed reaction is GTP + H2O = GDP + phosphate + H(+). Functionally, GTP hydrolase that promotes the GTP-dependent binding of aminoacyl-tRNA to the A-site of ribosomes during protein biosynthesis. The sequence is that of Elongation factor Tu 2 from Escherichia coli O139:H28 (strain E24377A / ETEC).